The sequence spans 136 residues: Crossover junction endodeoxyribonuclease Hjc (136 aa).

Glu-9 lines the Mg(2+) pocket. The active site involves Ser-29. Mg(2+) is bound by residues Asp-38 and Glu-51.

It belongs to the Holliday junction resolvase Hjc family. In terms of assembly, homodimer. Mg(2+) is required as a cofactor.

It carries out the reaction Endonucleolytic cleavage at a junction such as a reciprocal single-stranded crossover between two homologous DNA duplexes (Holliday junction).. Its function is as follows. A structure-specific endonuclease that resolves Holliday junction (HJ) intermediates during genetic recombination. Cleaves 4-way DNA junctions introducing paired nicks in opposing strands, leaving a 5'-terminal phosphate and a 3'-terminal hydroxyl group that are subsequently ligated to produce recombinant products. This is Crossover junction endodeoxyribonuclease Hjc from Archaeoglobus fulgidus (strain ATCC 49558 / DSM 4304 / JCM 9628 / NBRC 100126 / VC-16).